A 450-amino-acid chain; its full sequence is ATP-dependent protease ATPase subunit HslU (450 aa).

Residues Val29, 71-76 (GVGKTE), Asp261, Glu328, and Arg400 contribute to the ATP site.

Belongs to the ClpX chaperone family. HslU subfamily. In terms of assembly, a double ring-shaped homohexamer of HslV is capped on each side by a ring-shaped HslU homohexamer. The assembly of the HslU/HslV complex is dependent on binding of ATP.

The protein localises to the cytoplasm. ATPase subunit of a proteasome-like degradation complex; this subunit has chaperone activity. The binding of ATP and its subsequent hydrolysis by HslU are essential for unfolding of protein substrates subsequently hydrolyzed by HslV. HslU recognizes the N-terminal part of its protein substrates and unfolds these before they are guided to HslV for hydrolysis. In Rickettsia peacockii (strain Rustic), this protein is ATP-dependent protease ATPase subunit HslU.